We begin with the raw amino-acid sequence, 310 residues long: Methionyl-tRNA formyltransferase (310 aa).

109-112 (SLLP) serves as a coordination point for (6S)-5,6,7,8-tetrahydrofolate.

The protein belongs to the Fmt family.

The catalysed reaction is L-methionyl-tRNA(fMet) + (6R)-10-formyltetrahydrofolate = N-formyl-L-methionyl-tRNA(fMet) + (6S)-5,6,7,8-tetrahydrofolate + H(+). Attaches a formyl group to the free amino group of methionyl-tRNA(fMet). The formyl group appears to play a dual role in the initiator identity of N-formylmethionyl-tRNA by promoting its recognition by IF2 and preventing the misappropriation of this tRNA by the elongation apparatus. The sequence is that of Methionyl-tRNA formyltransferase from Pseudomonas putida (strain GB-1).